The chain runs to 132 residues: Transcription antitermination protein NusB (132 aa).

It belongs to the NusB family.

In terms of biological role, involved in transcription antitermination. Required for transcription of ribosomal RNA (rRNA) genes. Binds specifically to the boxA antiterminator sequence of the ribosomal RNA (rrn) operons. This chain is Transcription antitermination protein NusB, found in Sulfurimonas denitrificans (strain ATCC 33889 / DSM 1251) (Thiomicrospira denitrificans (strain ATCC 33889 / DSM 1251)).